The chain runs to 549 residues: Chaperonin GroEL (549 aa).

Residues Thr30 to Pro33, Lys51, Asp87 to Thr91, Gly415, Asn479 to Ala481, and Asp495 contribute to the ATP site.

It belongs to the chaperonin (HSP60) family. In terms of assembly, forms a cylinder of 14 subunits composed of two heptameric rings stacked back-to-back. Interacts with the co-chaperonin GroES.

The protein resides in the cytoplasm. The enzyme catalyses ATP + H2O + a folded polypeptide = ADP + phosphate + an unfolded polypeptide.. In terms of biological role, together with its co-chaperonin GroES, plays an essential role in assisting protein folding. The GroEL-GroES system forms a nano-cage that allows encapsulation of the non-native substrate proteins and provides a physical environment optimized to promote and accelerate protein folding. In Leptothrix cholodnii (strain ATCC 51168 / LMG 8142 / SP-6) (Leptothrix discophora (strain SP-6)), this protein is Chaperonin GroEL.